Reading from the N-terminus, the 334-residue chain is Beta-hexosaminidase (334 aa).

Substrate is bound by residues Asp60, Arg68, Arg133, and 163-164; that span reads KH. Residue His176 is the Proton donor/acceptor of the active site. Catalysis depends on Asp247, which acts as the Nucleophile.

This sequence belongs to the glycosyl hydrolase 3 family. NagZ subfamily.

The protein resides in the cytoplasm. The enzyme catalyses Hydrolysis of terminal non-reducing N-acetyl-D-hexosamine residues in N-acetyl-beta-D-hexosaminides.. It participates in cell wall biogenesis; peptidoglycan recycling. Plays a role in peptidoglycan recycling by cleaving the terminal beta-1,4-linked N-acetylglucosamine (GlcNAc) from peptide-linked peptidoglycan fragments, giving rise to free GlcNAc, anhydro-N-acetylmuramic acid and anhydro-N-acetylmuramic acid-linked peptides. This chain is Beta-hexosaminidase, found in Xanthomonas oryzae pv. oryzae (strain MAFF 311018).